The following is a 460-amino-acid chain: DNA repair protein RadA (460 aa).

A C4-type zinc finger spans residues Cys11–Cys28. ATP is bound at residue Gly102–Ser109. Residues Lys258 to Gly262 carry the RadA KNRFG motif motif. The lon-protease-like stretch occupies residues Asp357–Leu460.

It belongs to the RecA family. RadA subfamily.

DNA-dependent ATPase involved in processing of recombination intermediates, plays a role in repairing DNA breaks. Stimulates the branch migration of RecA-mediated strand transfer reactions, allowing the 3' invading strand to extend heteroduplex DNA faster. Binds ssDNA in the presence of ADP but not other nucleotides, has ATPase activity that is stimulated by ssDNA and various branched DNA structures, but inhibited by SSB. Does not have RecA's homology-searching function. Genetic experiments involving combination of radA mutations with mutations in recA, recB, recG, recJ, recQ, ruvA and ruvC show it plays a role in recombination and recombinational repair, probably involving stabilizing or processing branched DNA or blocked replication forks. Is genetically synergistic to RecG and RuvABC. May be involved in recovery of genetic rearrangements during replication fork breakdown. In combination with RadD is important in recovery from double-strand DNA breaks (DSB). This Escherichia coli (strain K12) protein is DNA repair protein RadA.